The chain runs to 211 residues: Mitotic spindle assembly checkpoint protein MAD2B (211 aa).

Residues 13–203 (QVVADVLCEF…SDILKMQLYV (191 aa)) enclose the HORMA domain. A mediates interaction with REV1 and REV3L and homodimerization region spans residues 21–155 (EFLEVAVHLI…FTVLVHTREA (135 aa)). Residues 150–211 (VHTREAATRN…YVEERAHKGS (62 aa)) are mediates interaction with ipaB.

In terms of assembly, homooligomer. Heterodimer with REV3L. This dimer forms the minimal DNA polymerase zeta complex (Pol-zeta2), with REV3L bearing DNA polymerase catalytic activity, although its activity is very low in this context. Component of the tetrameric Pol-zeta complex (Pol-zeta4), which consists of REV3L, MAD2L2, POLD2 and POLD3; Pol-zeta4 is the fully active form of DNA polymerase zeta. Component of the shieldin complex, consisting of SHLD1, SHLD2, SHLD3 and MAD2L2/REV7. Within the complex, SHLD2 forms a scaffold which interacts with a SHLD3-MAD2L2 subcomplex via its N-terminus, and with SHLD1 via its C-terminus. Interacts with REV1. Interacts with ADAM9. Interacts with CHAMP1. Interacts with FZR1 (in complex with the anaphase promoting complex APC). Interacts with CDC20; PubMed:11459825 could not detect the interaction. Interacts with RAN. Interacts with ELK1; the interaction is direct and recruits MAD2L2 to ELK1-specific promoters. May interact with the JNK kinases MAPK8 and/or MAPK9 to stimulate ELK1 phosphorylation and transcriptional activity upon DNA damage. Interacts with TCF7L2; prevents its binding to promoters and negatively modulates its transcriptional activity. Interacts with YY1AP1. Interacts with S.flexneri protein ipaB; prevents the interaction of MAD2L2 with FZR1 and CDC20 resulting in an activation of the anaphase-promoting complex APC and a cell cycle arrest. Interacts with PRCC; the interaction is direct. Interacts with POGZ. Interacts with ASTE1. Ubiquitously expressed.

The protein resides in the nucleus. The protein localises to the cytoplasm. It is found in the cytoskeleton. Its subcellular location is the spindle. It localises to the chromosome. Adapter protein able to interact with different proteins and involved in different biological processes. Mediates the interaction between the error-prone DNA polymerase zeta catalytic subunit REV3L and the inserter polymerase REV1, thereby mediating the second polymerase switching in translesion DNA synthesis. Translesion DNA synthesis releases the replication blockade of replicative polymerases, stalled in presence of DNA lesions. Component of the shieldin complex, which plays an important role in repair of DNA double-stranded breaks (DSBs). During G1 and S phase of the cell cycle, the complex functions downstream of TP53BP1 to promote non-homologous end joining (NHEJ) and suppress DNA end resection. Mediates various NHEJ-dependent processes including immunoglobulin class-switch recombination, and fusion of unprotected telomeres. May also regulate another aspect of cellular response to DNA damage through regulation of the JNK-mediated phosphorylation and activation of the transcriptional activator ELK1. Inhibits the FZR1- and probably CDC20-mediated activation of the anaphase promoting complex APC thereby regulating progression through the cell cycle. Regulates TCF7L2-mediated gene transcription and may play a role in epithelial-mesenchymal transdifferentiation. The protein is Mitotic spindle assembly checkpoint protein MAD2B (MAD2L2) of Homo sapiens (Human).